Reading from the N-terminus, the 490-residue chain is Tektin-3 (490 aa).

T7, T9, and T10 each carry an O-linked (GalNAc...) threonine glycan. Residues N41, N86, N103, N111, N276, and N344 are each glycosylated (N-linked (GlcNAc...) asparagine). Residues 424–451 (VHEVDDTIQTLQQRLRDAEDTLQSLVHI) are a coiled coil.

The protein belongs to the tektin family. As to quaternary structure, microtubule inner protein component of sperm flagellar doublet microtubules. Interacts with TEKT1, TEKT2, TEKT4 and TEKT5. Interacts with CCDC38. N- and O-glycosylated. Post-translationally, may be proteolytically processed during the epididymal transit of spermatozoa. In terms of processing, ubiquitinated, leading to its degradation. Deubiquitinated by USP16, promoting its stability. As to expression, expressed in spermatozoa. Expressed in airway epithelial cells.

The protein resides in the cytoplasm. The protein localises to the cytoskeleton. It is found in the cilium axoneme. Its subcellular location is the flagellum axoneme. It localises to the cytoplasmic vesicle. The protein resides in the secretory vesicle. The protein localises to the acrosome outer membrane. Functionally, microtubule inner protein (MIP) part of the dynein-decorated doublet microtubules (DMTs) in cilia and flagellar axoneme. Forms filamentous polymers in the walls of ciliary and flagellar microtubules. Required for normal sperm mobility. This chain is Tektin-3 (TEKT3), found in Homo sapiens (Human).